We begin with the raw amino-acid sequence, 251 residues long: Imidazole glycerol phosphate synthase subunit HisF (251 aa).

Catalysis depends on residues Asp-13 and Asp-132.

This sequence belongs to the HisA/HisF family. Heterodimer of HisH and HisF.

It is found in the cytoplasm. It catalyses the reaction 5-[(5-phospho-1-deoxy-D-ribulos-1-ylimino)methylamino]-1-(5-phospho-beta-D-ribosyl)imidazole-4-carboxamide + L-glutamine = D-erythro-1-(imidazol-4-yl)glycerol 3-phosphate + 5-amino-1-(5-phospho-beta-D-ribosyl)imidazole-4-carboxamide + L-glutamate + H(+). Its pathway is amino-acid biosynthesis; L-histidine biosynthesis; L-histidine from 5-phospho-alpha-D-ribose 1-diphosphate: step 5/9. In terms of biological role, IGPS catalyzes the conversion of PRFAR and glutamine to IGP, AICAR and glutamate. The HisF subunit catalyzes the cyclization activity that produces IGP and AICAR from PRFAR using the ammonia provided by the HisH subunit. This is Imidazole glycerol phosphate synthase subunit HisF from Campylobacter concisus (strain 13826).